The primary structure comprises 354 residues: Peptide chain release factor 1 (354 aa).

Residue Q232 is modified to N5-methylglutamine.

It belongs to the prokaryotic/mitochondrial release factor family. In terms of processing, methylated by PrmC. Methylation increases the termination efficiency of RF1.

It localises to the cytoplasm. In terms of biological role, peptide chain release factor 1 directs the termination of translation in response to the peptide chain termination codons UAG and UAA. The protein is Peptide chain release factor 1 of Phytoplasma australiense.